Here is a 348-residue protein sequence, read N- to C-terminus: Rhodopsin (348 aa).

Methionine 1 carries the N-acetylmethionine modification. Over 1–36 the chain is Extracellular; the sequence is MNGTEGLNFYVPFSNKTGVVRSPFEYPQYYLAEPWQ. N-linked (GlcNAc...) asparagine glycans are attached at residues asparagine 2 and asparagine 15. A helical transmembrane segment spans residues 37 to 61; the sequence is FSVLAAYMFLLIVLGFPINFLTLYV. Over 62–73 the chain is Cytoplasmic; sequence TVQHKKLRTPLN. Residues 74–96 traverse the membrane as a helical segment; that stretch reads YIPLNLAVANLFMVFGGFTTTLY. Residues 97–110 lie on the Extracellular side of the membrane; that stretch reads TSLHAYFVFGPTGC. Cysteine 110 and cysteine 187 are joined by a disulfide. The chain crosses the membrane as a helical span at residues 111-133; that stretch reads NLEGFFATLGGEIALWSLVVLAI. The short motif at 134–136 is the 'Ionic lock' involved in activated form stabilization element; that stretch reads ERY. Residues 134 to 152 lie on the Cytoplasmic side of the membrane; it reads ERYVVVCKPMSNFRFGENH. A helical transmembrane segment spans residues 153–173; sequence AIMGLALTWVMAMACAAPPLV. The Extracellular portion of the chain corresponds to 174 to 202; the sequence is GWSRYIPEGMQCSCGIDYYTSRQEVNNES. A Zn(2+)-binding site is contributed by glutamate 201. A helical transmembrane segment spans residues 203–224; the sequence is FVIYMFVVHFTIPLVIIFFCYG. Residues 225–252 lie on the Cytoplasmic side of the membrane; sequence QLVFTVKEAAAQQQESATTQKAEKEVTR. A helical membrane pass occupies residues 253–274; that stretch reads MVIIMVVAFLICWVPYASVAFY. Residues 275–286 are Extracellular-facing; sequence IFTHQGSDFGPI. Residue glutamine 279 participates in Zn(2+) binding. The chain crosses the membrane as a helical span at residues 287–308; it reads FMTIPSFFAKSSSIYNPVIYIM. Lysine 296 is subject to N6-(retinylidene)lysine. Residues 309–348 are Cytoplasmic-facing; the sequence is MNKQLRNCMLTTLCCGRNPLGDDEASTTASKTETSQVAPA. S-palmitoyl cysteine attachment occurs at residues cysteine 322 and cysteine 323. Residues 330 to 348 form an interaction with SAG region; it reads DDEASTTASKTETSQVAPA. Phosphoserine is present on serine 334. Threonine 335 and threonine 336 each carry phosphothreonine. Serine 338 is subject to Phosphoserine. Threonine 340 and threonine 342 each carry phosphothreonine. Serine 343 is modified (phosphoserine).

The protein belongs to the G-protein coupled receptor 1 family. Opsin subfamily. In terms of assembly, homodimer. May form a complex composed of RHO, GRK1 and RCVRN in a Ca(2+)-dependent manner; RCVRN prevents the interaction between GRK1 and RHO. Interacts with GRK1. Interacts (phosphorylated form) with SAG. Interacts with GNAT1. Interacts with GNAT3. SAG and G-proteins compete for a common binding site. Interacts with PRCD; the interaction promotes PRCD stability. Forms a complex with ASAP1 and ARF4. Forms a complex with ASAP1, RAB11A, Rabin8/RAB3IP, ARF4 and RAB11FIP3; the complex regulates Golgi-to-cilia rhodopsin/RHO transport in photoreceptors. In terms of processing, phosphorylated on some or all of the serine and threonine residues present in the C-terminal region. Post-translationally, contains one covalently linked retinal chromophore. Upon light absorption, the covalently bound 11-cis-retinal is converted to all-trans-retinal. After hydrolysis of the Schiff base and release of the covalently bound all-trans-retinal, active rhodopsin is regenerated by binding of a fresh molecule of 11-cis-retinal.

It localises to the membrane. The protein localises to the cell projection. The protein resides in the cilium. Its subcellular location is the photoreceptor outer segment. Functionally, photoreceptor required for image-forming vision at low light intensity. Required for photoreceptor cell viability after birth. Light-induced isomerization of 11-cis to all-trans retinal triggers a conformational change that activates signaling via G-proteins. Subsequent receptor phosphorylation mediates displacement of the bound G-protein alpha subunit by the arrestin SAG and terminates signaling. This Globicephala melas (Long-finned pilot whale) protein is Rhodopsin (RHO).